Here is a 586-residue protein sequence, read N- to C-terminus: Frizzled-10-A (586 aa).

A signal peptide spans 1–26; it reads MDVSGVTGLLRGTALLLVLAAALCSA. At 27–230 the chain is on the extracellular side; the sequence is ISSINPDRSG…DVYWSKDDKK (204 aa). The FZ domain occupies 35–156; that stretch reads SGDGRCQAIE…NDPNYLCMEA (122 aa). 5 disulfide bridges follow: cysteine 40–cysteine 101, cysteine 48–cysteine 94, cysteine 85–cysteine 123, cysteine 112–cysteine 153, and cysteine 116–cysteine 140. The N-linked (GlcNAc...) asparagine glycan is linked to asparagine 54. Asparagine 159 carries N-linked (GlcNAc...) asparagine glycosylation. A disordered region spans residues 161–199; sequence TDETPRGSSMLPPIFRPQRPSSGHEIYPKDPTSRSSCEN. A helical transmembrane segment spans residues 231-251; it reads FAFIWIAIWSILCFFSSAFTV. Residues 252 to 267 lie on the Cytoplasmic side of the membrane; it reads LTFLVDPLRFKYPERP. A helical transmembrane segment spans residues 268–288; it reads IIFLSMCYCVYSVGYIIRLFA. Residues 289–315 are Extracellular-facing; it reads GADSIACDRDSGQLYVIQEGLESTGCT. A helical transmembrane segment spans residues 316–336; it reads IVFLILYYFGMASSLWWVILT. Residues 337–356 lie on the Cytoplasmic side of the membrane; that stretch reads LTWFLAAGKKWGHEAIEANS. Residues 357–377 traverse the membrane as a helical segment; sequence SYFHLAAWAIPAVKTIMILVM. Topologically, residues 378–401 are extracellular; it reads RRVAGDELTGVCYVGSMDVNALTG. Residues 402–422 traverse the membrane as a helical segment; it reads FVLIPLACYLIIGTSFILSGF. Residues 423 to 448 are Cytoplasmic-facing; sequence VALFHIRRVMKTGGENTDKLEKLMVR. Residues 449-469 traverse the membrane as a helical segment; it reads IGVFSVLYTVPATCVIACYFY. Over 470 to 507 the chain is Extracellular; the sequence is ERLNMDFWKILATQDKCKMDSQTKTLDCTMTSSIPAVE. Residues 508-528 traverse the membrane as a helical segment; the sequence is IFMVKIFMLLVVGITSGMWIW. Topologically, residues 529–586 are cytoplasmic; the sequence is TSKTVQSWQNVFSKRLKKRNRSKPASVITSAGIYKKPQHPPKVHHGKYESALQSPTCV. The short motif at 531 to 536 is the Lys-Thr-X-X-X-Trp motif, mediates interaction with the PDZ domain of Dvl family members element; sequence KTVQSW. A disordered region spans residues 563-586; sequence KKPQHPPKVHHGKYESALQSPTCV. Basic residues predominate over residues 564 to 573; sequence KPQHPPKVHH. A PDZ-binding motif is present at residues 584–586; the sequence is TCV.

This sequence belongs to the G-protein coupled receptor Fz/Smo family. Expressed in liver, lung, brain, testis, stomach, kidney, eye, skeletal muscle and skin.

The protein resides in the cell membrane. Its function is as follows. Receptor for Wnt proteins. Most of frizzled receptors are coupled to the beta-catenin canonical signaling pathway, which leads to the activation of disheveled proteins, inhibition of GSK-3 kinase, nuclear accumulation of beta-catenin and activation of Wnt target genes. A second signaling pathway involving PKC and calcium fluxes has been seen for some family members, but it is not yet clear if it represents a distinct pathway or if it can be integrated in the canonical pathway, as PKC seems to be required for Wnt-mediated inactivation of GSK-3 kinase. Both pathways seem to involve interactions with G-proteins. May be involved in transduction and intercellular transmission of polarity information during tissue morphogenesis and/or in differentiated tissues. Activated by Wnt8. Could have an antagonizing activity in the morphogenesis during development. This chain is Frizzled-10-A (fzd10-a), found in Xenopus laevis (African clawed frog).